A 192-amino-acid chain; its full sequence is Phosphoheptose isomerase (192 aa).

One can recognise an SIS domain in the interval 37-192; sequence LADSFKAGGK…IQLIEKEMVK (156 aa). 52 to 54 lines the substrate pocket; sequence NGG. Zn(2+) is bound by residues H61 and E65. Residues E65, 93–94, 119–121, S124, and Q172 contribute to the substrate site; these read ND and STS. Residues Q172 and H180 each coordinate Zn(2+).

This sequence belongs to the SIS family. GmhA subfamily. As to quaternary structure, homotetramer. The cofactor is Zn(2+).

It localises to the cytoplasm. The catalysed reaction is 2 D-sedoheptulose 7-phosphate = D-glycero-alpha-D-manno-heptose 7-phosphate + D-glycero-beta-D-manno-heptose 7-phosphate. Its pathway is carbohydrate biosynthesis; D-glycero-D-manno-heptose 7-phosphate biosynthesis; D-glycero-alpha-D-manno-heptose 7-phosphate and D-glycero-beta-D-manno-heptose 7-phosphate from sedoheptulose 7-phosphate: step 1/1. Its function is as follows. Catalyzes the isomerization of sedoheptulose 7-phosphate in D-glycero-D-manno-heptose 7-phosphate. This Shigella dysenteriae serotype 1 (strain Sd197) protein is Phosphoheptose isomerase.